The chain runs to 240 residues: Small ribosomal subunit protein uS3 (240 aa).

Residues I39–N109 enclose the KH type-2 domain. A disordered region spans residues T216 to Q240.

It belongs to the universal ribosomal protein uS3 family. As to quaternary structure, part of the 30S ribosomal subunit. Forms a tight complex with proteins S10 and S14.

In terms of biological role, binds the lower part of the 30S subunit head. Binds mRNA in the 70S ribosome, positioning it for translation. The polypeptide is Small ribosomal subunit protein uS3 (Picosynechococcus sp. (strain ATCC 27264 / PCC 7002 / PR-6) (Agmenellum quadruplicatum)).